The chain runs to 367 residues: Cyclin-Y-like protein 1 (367 aa).

Ser73, Ser111, and Ser118 each carry phosphoserine. One can recognise a Cyclin N-terminal domain in the interval 186–291; that stretch reads EYFKHDPEHK…FLELLQFNIN (106 aa). Ser352 bears the Phosphoserine mark.

The protein belongs to the cyclin family. Cyclin Y subfamily. As to quaternary structure, interacts with CDK16; this interaction mutually increases the stability of CDK16 and CCNYL1 and increases the kinase activity of CDK16. Highly expressed in the testis. Largely restricted to germ cells in the testis.

The protein localises to the cell membrane. Functionally, key regulator of Wnt signaling implicated in various biological processes including male fertility, embryonic neurogenesis and cortex development. Activates the cyclin-dependent kinase CDK16, and promotes sperm maturation. This chain is Cyclin-Y-like protein 1, found in Mus musculus (Mouse).